The following is a 380-amino-acid chain: Cytochrome b (380 aa).

4 helical membrane-spanning segments follow: residues 34 to 54 (FGSLLAVCLATQIITGLLLAM), 78 to 99 (WLIRNLHANGASFFFICIFLHI), 114 to 134 (WNTGVVLLLTLMATAFVGYVL), and 179 to 199 (FFALHFLLPFVIAGITIIHLT). Heme b contacts are provided by His-84 and His-98. Positions 183 and 197 each coordinate heme b. Position 202 (His-202) interacts with a ubiquinone. 4 consecutive transmembrane segments (helical) span residues 227–247 (LKDILGLTLMFIPFLTLALFS), 289–309 (LGGVLALAASVLILLLIPFLH), 321–341 (LSQILFWLLVANLLILTWIGS), and 348–368 (FIIIGQMASFSYFSILLILFP).

This sequence belongs to the cytochrome b family. In terms of assembly, the cytochrome bc1 complex contains 11 subunits: 3 respiratory subunits (MT-CYB, CYC1 and UQCRFS1), 2 core proteins (UQCRC1 and UQCRC2) and 6 low-molecular weight proteins (UQCRH/QCR6, UQCRB/QCR7, UQCRQ/QCR8, UQCR10/QCR9, UQCR11/QCR10 and a cleavage product of UQCRFS1). This cytochrome bc1 complex then forms a dimer. Requires heme b as cofactor.

It localises to the mitochondrion inner membrane. Functionally, component of the ubiquinol-cytochrome c reductase complex (complex III or cytochrome b-c1 complex) that is part of the mitochondrial respiratory chain. The b-c1 complex mediates electron transfer from ubiquinol to cytochrome c. Contributes to the generation of a proton gradient across the mitochondrial membrane that is then used for ATP synthesis. The chain is Cytochrome b (MT-CYB) from Pavo muticus (Green peafowl).